Consider the following 110-residue polypeptide: Large ribosomal subunit protein P2B (110 aa).

Ser29 bears the Phosphoserine mark. Lys49 participates in a covalent cross-link: Glycyl lysine isopeptide (Lys-Gly) (interchain with G-Cter in ubiquitin). Positions 66–110 (VPTGGASSAAAGAAGAAAGGDAAEEEKEEEAKEESDDDMGFGLFD) are disordered. The segment covering 69–86 (GGASSAAAGAAGAAAGGD) has biased composition (low complexity). Over residues 87–104 (AAEEEKEEEAKEESDDDM) the composition is skewed to acidic residues. Ser100 carries the phosphoserine modification.

This sequence belongs to the eukaryotic ribosomal protein P1/P2 family. As to quaternary structure, component of the large ribosomal subunit (LSU). Mature yeast ribosomes consist of a small (40S) and a large (60S) subunit. The 40S small subunit contains 1 molecule of ribosomal RNA (18S rRNA) and 33 different proteins (encoded by 57 genes). The large 60S subunit contains 3 rRNA molecules (25S, 5.8S and 5S rRNA) and 46 different proteins (encoded by 81 genes). The 5 acidic ribosomal P-proteins form the stalk structure of the 60S subunit. They are organized as a pentameric complex in which uL10/P0 interacts with 2 heterodimers, P1A-P2B and P1B-P2A. In terms of processing, the N-terminus is not modified.

The protein resides in the cytoplasm. In terms of biological role, component of the ribosome, a large ribonucleoprotein complex responsible for the synthesis of proteins in the cell. The small ribosomal subunit (SSU) binds messenger RNAs (mRNAs) and translates the encoded message by selecting cognate aminoacyl-transfer RNA (tRNA) molecules. The large subunit (LSU) contains the ribosomal catalytic site termed the peptidyl transferase center (PTC), which catalyzes the formation of peptide bonds, thereby polymerizing the amino acids delivered by tRNAs into a polypeptide chain. The nascent polypeptides leave the ribosome through a tunnel in the LSU and interact with protein factors that function in enzymatic processing, targeting, and the membrane insertion of nascent chains at the exit of the ribosomal tunnel. In Saccharomyces cerevisiae (strain ATCC 204508 / S288c) (Baker's yeast), this protein is Large ribosomal subunit protein P2B.